Consider the following 1510-residue polypeptide: Chromosome partition protein MukB (1510 aa).

A coiled-coil region spans residues 6–30 (ELENEIELESDEVIMENENVEEIVD). ATP is bound at residue 75-82 (GGNGAGKS). Coiled coils occupy residues 346–506 (QHRL…HKMS), 553–611 (QQTP…EDIS), 673–706 (MQSQ…RLSQ), 821–846 (SAAR…AQIA), 876–1064 (EALM…IQLQ), 1094–1149 (ERAR…RELV), and 1249–1304 (DAIE…LQNI). Residues 707-824 (PDGSEDPRLN…EIPLFGSAAR (118 aa)) are flexible hinge.

The protein belongs to the SMC family. MukB subfamily. In terms of assembly, homodimerization via its hinge domain. Binds to DNA via its C-terminal region. Interacts, and probably forms a ternary complex, with MukE and MukF via its C-terminal region. The complex formation is stimulated by calcium or magnesium. Interacts with tubulin-related protein FtsZ.

It localises to the cytoplasm. The protein localises to the nucleoid. Functionally, plays a central role in chromosome condensation, segregation and cell cycle progression. Functions as a homodimer, which is essential for chromosome partition. Involved in negative DNA supercoiling in vivo, and by this means organize and compact chromosomes. May achieve or facilitate chromosome segregation by condensation DNA from both sides of a centrally located replisome during cell division. The protein is Chromosome partition protein MukB of Haemophilus influenzae (strain PittGG).